Here is a 179-residue protein sequence, read N- to C-terminus: Large ribosomal subunit protein uL5 (179 aa).

The protein belongs to the universal ribosomal protein uL5 family. Part of the 50S ribosomal subunit; part of the 5S rRNA/L5/L18/L25 subcomplex. Contacts the 5S rRNA and the P site tRNA. Forms a bridge to the 30S subunit in the 70S ribosome.

Functionally, this is one of the proteins that bind and probably mediate the attachment of the 5S RNA into the large ribosomal subunit, where it forms part of the central protuberance. In the 70S ribosome it contacts protein S13 of the 30S subunit (bridge B1b), connecting the 2 subunits; this bridge is implicated in subunit movement. Contacts the P site tRNA; the 5S rRNA and some of its associated proteins might help stabilize positioning of ribosome-bound tRNAs. The protein is Large ribosomal subunit protein uL5 of Salmonella agona (strain SL483).